Consider the following 2475-residue polypeptide: Polyprotein pp220 (2475 aa).

G2 carries the N-myristoyl glycine; by host lipid modification. Residues 2185–2212 are a coiled coil; sequence KNQLIADLTTIREQLVSMRREVENMIQT.

Belongs to the asfivirus polyprotein pp220 family. The polyprotein is not glycosylated. In terms of processing, specific enzymatic cleavages in vivo by the viral pS273R protease yield mature proteins.

The protein resides in the host cytoplasm. It localises to the host perinuclear region. The protein localises to the virion. It is found in the host nucleus. Its function is as follows. Essential for the core assembly. Its myristoyl moiety may function as a membrane-anchoring signal to bind the developing core shell to the inner viral envelope. Functionally, the structural protein p34 is a component of the virus core shell. The structural protein p14 is a component of the virus core shell. In terms of biological role, the structural protein p37 is a component of the virus core shell. Its function is as follows. The structural protein p150 is a component of the virus core shell. In Ornithodoros (relapsing fever ticks), this protein is Polyprotein pp220.